Here is a 190-residue protein sequence, read N- to C-terminus: Probable nicotinate-nucleotide adenylyltransferase (190 aa).

It belongs to the NadD family.

It carries out the reaction nicotinate beta-D-ribonucleotide + ATP + H(+) = deamido-NAD(+) + diphosphate. It participates in cofactor biosynthesis; NAD(+) biosynthesis; deamido-NAD(+) from nicotinate D-ribonucleotide: step 1/1. Its function is as follows. Catalyzes the reversible adenylation of nicotinate mononucleotide (NaMN) to nicotinic acid adenine dinucleotide (NaAD). The polypeptide is Probable nicotinate-nucleotide adenylyltransferase (Frankia alni (strain DSM 45986 / CECT 9034 / ACN14a)).